Here is a 560-residue protein sequence, read N- to C-terminus: Factor VII-activating protease (560 aa).

An N-terminal signal peptide occupies residues 1–23 (MFARMSDLHVLLLMALVGKTACG). Asn54 carries an N-linked (GlcNAc...) asparagine glycan. EGF-like domains are found at residues 73-109 (QADP…NKCQ), 111-148 (VQNT…PSCS), and 150-188 (VVPV…KFCE). 18 cysteine pairs are disulfide-bonded: Cys77–Cys88, Cys82–Cys97, Cys99–Cys108, Cys115–Cys125, Cys120–Cys136, Cys138–Cys147, Cys154–Cys165, Cys159–Cys176, Cys178–Cys187, Cys194–Cys276, Cys215–Cys257, Cys246–Cys271, Cys301–Cys435, Cys347–Cys363, Cys355–Cys424, Cys447–Cys515, Cys477–Cys493, and Cys505–Cys533. A Kringle domain is found at 193-276 (DCYVGDGYSY…KWEYCDVSAC (84 aa)). Residue Asn207 is glycosylated (N-linked (GlcNAc...) asparagine). Residues 314-555 (IYGGFKSTAG…FLNWIKATIK (242 aa)) enclose the Peptidase S1 domain. Catalysis depends on charge relay system residues His362 and Asp411. Ser509 functions as the Charge relay system in the catalytic mechanism.

It belongs to the peptidase S1 family. In terms of assembly, heterodimer; disulfide-linked. Heterodimer of a 50 kDa heavy and a 27 kDa light chain linked by a disulfide bond. Proteolytic cleavage at Gly-23 or Met-27 can give rise to the 50 kDa heavy chain (HC) and cleavage at Arg-313 or Lys-319 can give rise to the 27 kDa light chain (LC). The HC can undergo further proteolytic cleavage giving rise to a 26 kDa fragment. The LC can undergo further proteolytic cleavage at Arg-313 leading to a 17-kDa fragment and at Arg-480 leading to a 8-kDa fragment. As to expression, ubiquitously expressed.

The protein localises to the secreted. In terms of biological role, cleaves the alpha-chain at multiple sites and the beta-chain between 'Lys-53' and 'Lys-54' but not the gamma-chain of fibrinogen and therefore does not initiate the formation of the fibrin clot and does not cause the fibrinolysis directly. It does not cleave (activate) prothrombin and plasminogen but converts the inactive single chain urinary plasminogen activator (pro-urokinase) to the active two chain form. Activates coagulation factor VII. May function as a tumor suppressor negatively regulating cell proliferation and cell migration. In Homo sapiens (Human), this protein is Factor VII-activating protease.